The primary structure comprises 320 residues: Homoserine kinase (320 aa).

100–110 lines the ATP pocket; that stretch reads PLSSGMGSSAA.

It belongs to the GHMP kinase family. Homoserine kinase subfamily.

It is found in the cytoplasm. The catalysed reaction is L-homoserine + ATP = O-phospho-L-homoserine + ADP + H(+). Its pathway is amino-acid biosynthesis; L-threonine biosynthesis; L-threonine from L-aspartate: step 4/5. Its function is as follows. Catalyzes the ATP-dependent phosphorylation of L-homoserine to L-homoserine phosphate. The protein is Homoserine kinase of Chlorobium phaeovibrioides (strain DSM 265 / 1930) (Prosthecochloris vibrioformis (strain DSM 265)).